The following is a 342-amino-acid chain: UDP-3-O-acylglucosamine N-acyltransferase (342 aa).

Residue H243 is the Proton acceptor of the active site.

The protein belongs to the transferase hexapeptide repeat family. LpxD subfamily. In terms of assembly, homotrimer.

The catalysed reaction is a UDP-3-O-[(3R)-3-hydroxyacyl]-alpha-D-glucosamine + a (3R)-hydroxyacyl-[ACP] = a UDP-2-N,3-O-bis[(3R)-3-hydroxyacyl]-alpha-D-glucosamine + holo-[ACP] + H(+). It functions in the pathway bacterial outer membrane biogenesis; LPS lipid A biosynthesis. In terms of biological role, catalyzes the N-acylation of UDP-3-O-acylglucosamine using 3-hydroxyacyl-ACP as the acyl donor. Is involved in the biosynthesis of lipid A, a phosphorylated glycolipid that anchors the lipopolysaccharide to the outer membrane of the cell. The protein is UDP-3-O-acylglucosamine N-acyltransferase of Coxiella burnetii (strain CbuK_Q154) (Coxiella burnetii (strain Q154)).